Reading from the N-terminus, the 253-residue chain is Maleate isomerase (253 aa).

Residues asparagine 14, 80-82, tyrosine 137, and asparagine 167 each bind substrate; that span reads CLV. The active-site Nucleophile is the cysteine 80. An S-(2-succinyl)cysteine modification is found at cysteine 80. Residue cysteine 198 is the Proton donor of the active site. 199-200 contacts substrate; that stretch reads VQ.

Belongs to the maleate isomerase family. Homodimer.

The catalysed reaction is maleate = fumarate. In terms of biological role, catalyzes cis-trans isomerization of the C2-C3 double bond in maleate to yield fumarate. This chain is Maleate isomerase, found in Alcaligenes faecalis.